A 353-amino-acid polypeptide reads, in one-letter code: Cruciform cutting endonuclease 1, mitochondrial (353 aa).

2 residues coordinate Mg(2+): D293 and D294.

In terms of assembly, homodimer. Requires Mg(2+) as cofactor.

It is found in the mitochondrion. The enzyme catalyses Endonucleolytic cleavage at a junction such as a reciprocal single-stranded crossover between two homologous DNA duplexes (Holliday junction).. Its function is as follows. Capable of resolving Holliday junctions. Specific for 4-way junctions. Seems to be important for the maintenance of mitochondrial DNA. Cleaves fixed junctions at the point of strand exchange. Cleaves after 5'-CT-3' sequence. The sequence is that of Cruciform cutting endonuclease 1, mitochondrial (CCE1) from Saccharomyces cerevisiae (strain ATCC 204508 / S288c) (Baker's yeast).